The sequence spans 81 residues: MVHVVKIYDTCIGCTQCVRACPCDVLEMVPWDGCKASQIASSPRTEDCIGCKRCETACPTDFLSIRVYLGAETSRSMGLTY.

2 4Fe-4S ferredoxin-type domains span residues Val-2 to Trp-31 and Ile-39 to Tyr-68. Positions 11, 14, 17, 21, 48, 51, 54, and 58 each coordinate [4Fe-4S] cluster.

As to quaternary structure, the eukaryotic PSI reaction center is composed of at least 11 subunits. The cofactor is [4Fe-4S] cluster.

The protein resides in the plastid. The protein localises to the chloroplast thylakoid membrane. It carries out the reaction reduced [plastocyanin] + hnu + oxidized [2Fe-2S]-[ferredoxin] = oxidized [plastocyanin] + reduced [2Fe-2S]-[ferredoxin]. Functionally, apoprotein for the two 4Fe-4S centers FA and FB of photosystem I (PSI); essential for photochemical activity. FB is the terminal electron acceptor of PSI, donating electrons to ferredoxin. The C-terminus interacts with PsaA/B/D and helps assemble the protein into the PSI complex. Required for binding of PsaD and PsaE to PSI. PSI is a plastocyanin/cytochrome c6-ferredoxin oxidoreductase, converting photonic excitation into a charge separation, which transfers an electron from the donor P700 chlorophyll pair to the spectroscopically characterized acceptors A0, A1, FX, FA and FB in turn. The chain is Photosystem I iron-sulfur center from Cyanidium caldarium (Red alga).